We begin with the raw amino-acid sequence, 261 residues long: tRNA pseudouridine synthase A (261 aa).

The Nucleophile role is filled by Asp-55. Tyr-114 contacts substrate.

It belongs to the tRNA pseudouridine synthase TruA family. In terms of assembly, homodimer.

It carries out the reaction uridine(38/39/40) in tRNA = pseudouridine(38/39/40) in tRNA. Functionally, formation of pseudouridine at positions 38, 39 and 40 in the anticodon stem and loop of transfer RNAs. The protein is tRNA pseudouridine synthase A of Paracoccus denitrificans (strain Pd 1222).